The chain runs to 415 residues: Esterase FrsA (415 aa).

The segment at 1–23 is disordered; sequence MANRNLSESLFKPRQKHQETSTL.

Belongs to the FrsA family.

The catalysed reaction is a carboxylic ester + H2O = an alcohol + a carboxylate + H(+). In terms of biological role, catalyzes the hydrolysis of esters. The sequence is that of Esterase FrsA from Photorhabdus laumondii subsp. laumondii (strain DSM 15139 / CIP 105565 / TT01) (Photorhabdus luminescens subsp. laumondii).